The sequence spans 194 residues: Small ribosomal subunit protein uS4c (194 aa).

In terms of domain architecture, S4 RNA-binding spans 82 to 143 (MRLDNILFRL…KQRSKALIQN (62 aa)).

This sequence belongs to the universal ribosomal protein uS4 family. As to quaternary structure, part of the 30S ribosomal subunit. Contacts protein S5. The interaction surface between S4 and S5 is involved in control of translational fidelity.

It is found in the plastid. Its subcellular location is the chloroplast. Its function is as follows. One of the primary rRNA binding proteins, it binds directly to 16S rRNA where it nucleates assembly of the body of the 30S subunit. With S5 and S12 plays an important role in translational accuracy. In Sisyrinchium striatum (Satin flower), this protein is Small ribosomal subunit protein uS4c (rps4).